The primary structure comprises 349 residues: Histidinol-phosphate aminotransferase (349 aa).

Lys-206 is modified (N6-(pyridoxal phosphate)lysine).

This sequence belongs to the class-II pyridoxal-phosphate-dependent aminotransferase family. Histidinol-phosphate aminotransferase subfamily. As to quaternary structure, homodimer. Pyridoxal 5'-phosphate is required as a cofactor.

It carries out the reaction L-histidinol phosphate + 2-oxoglutarate = 3-(imidazol-4-yl)-2-oxopropyl phosphate + L-glutamate. The protein operates within amino-acid biosynthesis; L-histidine biosynthesis; L-histidine from 5-phospho-alpha-D-ribose 1-diphosphate: step 7/9. The chain is Histidinol-phosphate aminotransferase from Hydrogenobaculum sp. (strain Y04AAS1).